A 122-amino-acid chain; its full sequence is MIQMQSILEVADNSGAKKVMCIKVLGGSHHMVAKLGDVIVISVKEAIPGGKVKKGDVYKGVIVRTKTGVVRPDGSTIKFDKNALVLLNKQDEPIGTRVFGPVTRELRAKKYVRIMSLAEEVL.

Belongs to the universal ribosomal protein uL14 family. In terms of assembly, part of the 50S ribosomal subunit. Forms a cluster with proteins L3 and L19. In the 70S ribosome, L14 and L19 interact and together make contacts with the 16S rRNA in bridges B5 and B8.

Functionally, binds to 23S rRNA. Forms part of two intersubunit bridges in the 70S ribosome. The protein is Large ribosomal subunit protein uL14 of Rickettsia canadensis (strain McKiel).